Consider the following 435-residue polypeptide: Zinc finger CCCH domain-containing protein 17 (435 aa).

2 disordered regions span residues 1–30 and 58–107; these read MDIE…SSTS and TAKR…GPRH. The C3H1-type 1 zinc-finger motif lies at 28–54; that stretch reads STSGKVCIHWRAGRCNRFPCPYLHSEL. Residues 77–103 are compositionally biased toward gly residues; the sequence is SGGGGGRGAGGAGGPNKWGRGPGGADG. The C3H1-type 2 zinc finger occupies 108–135; that stretch reads KVPDRPCRYFLAGDCSYGEKCRYPHSYS. WD repeat units lie at residues 148 to 189, 191 to 225, 227 to 264, 271 to 308, 311 to 348, 355 to 395, and 397 to 435; these read GHEK…GVIN, GREI…EMNL, GPTG…NGFE, GHQL…CIQT, DHTG…SLEV, EHGA…DRGR, and FSKQ…SQTK.

This Oryza sativa subsp. japonica (Rice) protein is Zinc finger CCCH domain-containing protein 17.